The chain runs to 346 residues: Pyrophosphate--fructose 6-phosphate 1-phosphotransferase (346 aa).

Position 13 (G13) interacts with diphosphate. Position 105 (E105) interacts with Mg(2+). Residues T127–D129, R164, M171–R173, E224, R269, and H275–R278 contribute to the substrate site. D129 (proton acceptor) is an active-site residue.

The protein belongs to the phosphofructokinase type A (PFKA) family. Mixed-substrate PFK group III subfamily. As to quaternary structure, homodimer. The cofactor is Mg(2+).

Its subcellular location is the cytoplasm. The catalysed reaction is beta-D-fructose 6-phosphate + diphosphate = beta-D-fructose 1,6-bisphosphate + phosphate + H(+). Its pathway is carbohydrate degradation; glycolysis; D-glyceraldehyde 3-phosphate and glycerone phosphate from D-glucose: step 3/4. With respect to regulation, non-allosteric. Catalyzes the phosphorylation of D-fructose 6-phosphate, the first committing step of glycolysis. Uses inorganic phosphate (PPi) as phosphoryl donor instead of ATP like common ATP-dependent phosphofructokinases (ATP-PFKs), which renders the reaction reversible, and can thus function both in glycolysis and gluconeogenesis. Consistently, PPi-PFK can replace the enzymes of both the forward (ATP-PFK) and reverse (fructose-bisphosphatase (FBPase)) reactions. In Dictyoglomus thermophilum, this protein is Pyrophosphate--fructose 6-phosphate 1-phosphotransferase.